We begin with the raw amino-acid sequence, 203 residues long: ATP-dependent Clp protease proteolytic subunit 2 (203 aa).

Catalysis depends on S100, which acts as the Nucleophile. H125 is an active-site residue.

This sequence belongs to the peptidase S14 family. In terms of assembly, fourteen ClpP subunits assemble into 2 heptameric rings which stack back to back to give a disk-like structure with a central cavity, resembling the structure of eukaryotic proteasomes.

The protein localises to the cytoplasm. The catalysed reaction is Hydrolysis of proteins to small peptides in the presence of ATP and magnesium. alpha-casein is the usual test substrate. In the absence of ATP, only oligopeptides shorter than five residues are hydrolyzed (such as succinyl-Leu-Tyr-|-NHMec, and Leu-Tyr-Leu-|-Tyr-Trp, in which cleavage of the -Tyr-|-Leu- and -Tyr-|-Trp bonds also occurs).. In terms of biological role, cleaves peptides in various proteins in a process that requires ATP hydrolysis. Has a chymotrypsin-like activity. Plays a major role in the degradation of misfolded proteins. This Nocardia farcinica (strain IFM 10152) protein is ATP-dependent Clp protease proteolytic subunit 2.